The sequence spans 1064 residues: WD repeat-containing protein on Y chromosome (1064 aa).

WD repeat units lie at residues 150 to 194 (EEVT…IRTA), 317 to 356 (RIPL…EPSA), 360 to 399 (GHNG…LLQT), 450 to 489 (THAA…RKII), 502 to 541 (IIDI…VVRN), 589 to 629 (FHTD…RRYS), 742 to 781 (KTGD…VPAS), and 825 to 864 (GHLK…LGTL). Positions 1022-1044 (SSLNIKQPTRRRSGKTHDPRNIR) are disordered.

The chain is WD repeat-containing protein on Y chromosome from Drosophila ananassae (Fruit fly).